Consider the following 340-residue polypeptide: GTP 3',8-cyclase (340 aa).

Residues 8–230 form the Radical SAM core domain; sequence KLGRPIRDLR…EQHFEIDPVE (223 aa). R17 contributes to the GTP binding site. Positions 24 and 28 each coordinate [4Fe-4S] cluster. Y30 contacts S-adenosyl-L-methionine. C31 is a [4Fe-4S] cluster binding site. R71 is a binding site for GTP. G75 is a binding site for S-adenosyl-L-methionine. GTP is bound at residue T102. S-adenosyl-L-methionine is bound at residue S126. K163 lines the GTP pocket. M197 contributes to the S-adenosyl-L-methionine binding site. [4Fe-4S] cluster-binding residues include C261 and C264. 266–268 serves as a coordination point for GTP; the sequence is RAR. C278 contributes to the [4Fe-4S] cluster binding site.

Belongs to the radical SAM superfamily. MoaA family. In terms of assembly, monomer and homodimer. Requires [4Fe-4S] cluster as cofactor.

It catalyses the reaction GTP + AH2 + S-adenosyl-L-methionine = (8S)-3',8-cyclo-7,8-dihydroguanosine 5'-triphosphate + 5'-deoxyadenosine + L-methionine + A + H(+). It functions in the pathway cofactor biosynthesis; molybdopterin biosynthesis. Functionally, catalyzes the cyclization of GTP to (8S)-3',8-cyclo-7,8-dihydroguanosine 5'-triphosphate. The sequence is that of GTP 3',8-cyclase from Staphylococcus aureus (strain bovine RF122 / ET3-1).